The sequence spans 275 residues: MLTPMVAGGVVFPGLFLLSKNTLQRLPQLRWEEADAVIVSARLVSSVQAIMASTAGYIVSTSCKHIIDDQHWLSSAYTQFAVPYFIYDIYAMFLCHWHKHQVKGHGGEDGTPRALGSTWAVVRGYLHKEFLMVLHHAAMVLVCFPLSVVWRQGKGDFFLGCMLMAEVSTPFVCLGKILIQYKQQHTLLHKVNGALMLLSFLCCRVLLFPYLYWAYGRHAGLPLLSVPMAIPAHVNLGAALLLAPQLYWFFLICRGACRLFRPRGSPPPSPCQTQD.

The 228-residue stretch at 34-261 folds into the TLC domain; sequence ADAVIVSARL…ICRGACRLFR (228 aa). The next 4 helical transmembrane spans lie at 130–150, 159–179, 194–214, and 232–252; these read FLMV…SVVW, LGCM…KILI, ALML…LYWA, and AHVN…FFLI.

As to expression, each isoform has a distinct expression pattern. Isoform 1 is highly expressed in brain. Isoform 2 is expressed at low levels, if any, in all analyzed tissues, with slightly higher levels in testis. Isoform 3 is expressed at very high levels in testis and, at lower levels, in white adipose tissue. In epididymal fat, isoform 3 is expressed at higher levels in obese mice compared with lean mice. By contrast, isoform 1 and 2 levels are significantly lower in obese mice compared with lean mice.

It localises to the golgi apparatus membrane. Its subcellular location is the endoplasmic reticulum membrane. It catalyses the reaction sphing-4-enine + octadecanoyl-CoA = N-octadecanoylsphing-4-enine + CoA + H(+). The catalysed reaction is eicosanoyl-CoA + sphing-4-enine = N-eicosanoyl-sphing-4-enine + CoA + H(+). It carries out the reaction sphing-4-enine + hexadecanoyl-CoA = N-hexadecanoylsphing-4-enine + CoA + H(+). Involved in ceramide synthesis. In vitro, isoform 3 stimulates the production of C16-, C18- and C20-ceramides, isoform 1 slightly increases the levels of C18- and C20-ceramides, while isoform 2 exhibits only minimal activity. May interfere with adipogenesis by stimulating ceramide synthesis. This is Ceramide synthase (Tlcd3b) from Mus musculus (Mouse).